The primary structure comprises 76 residues: Protein CASC2, isoforms 1/2 (76 aa).

A disordered region spans residues M1–D20.

This Homo sapiens (Human) protein is Protein CASC2, isoforms 1/2 (CASC2).